Reading from the N-terminus, the 660-residue chain is Polycomb protein SCMH1 (660 aa).

MBT repeat units lie at residues 28-126 and 134-235; these read FTWD…LQPP and SSWP…LQPP. Residues 233–345 are disordered; the sequence is QPPGTKVVIP…EPDTSTVPQD (113 aa). Composition is skewed to basic residues over residues 273 to 284 and 305 to 320; these read RGRKPGKKRGRT and FPKK…RKPR. Residues 330-343 show a composition bias toward low complexity; it reads PTTSTPEPDTSTVP. Residues 593–658 form the SAM domain; it reads WTVEDVMQFV…SYHIDRLKQG (66 aa).

This sequence belongs to the SCM family. In terms of assembly, interacts with the SAM domain of PHC1 via its SAM domain in vitro. Associates with a PRC1-like complex. Strongly expressed in heart, muscle and pancreas. Weakly expressed in brain, placenta, lung, liver and kidney.

It is found in the nucleus. Its function is as follows. Associates with Polycomb group (PcG) multiprotein complexes; the complex class is required to maintain the transcriptionally repressive state of some genes. This Homo sapiens (Human) protein is Polycomb protein SCMH1.